The primary structure comprises 376 residues: Queuine tRNA-ribosyltransferase (376 aa).

The Proton acceptor role is filled by Asp-89. Residues 89-93 (DSGGF), Asp-143, Gln-194, and Gly-221 contribute to the substrate site. The tract at residues 252 to 258 (GVGTPAN) is RNA binding. The active-site Nucleophile is the Asp-271. Residues Cys-309, Cys-311, Cys-314, and His-340 each coordinate Zn(2+).

It belongs to the queuine tRNA-ribosyltransferase family. Homodimer. Within each dimer, one monomer is responsible for RNA recognition and catalysis, while the other monomer binds to the replacement base PreQ1. Zn(2+) is required as a cofactor.

The enzyme catalyses 7-aminomethyl-7-carbaguanine + guanosine(34) in tRNA = 7-aminomethyl-7-carbaguanosine(34) in tRNA + guanine. It participates in tRNA modification; tRNA-queuosine biosynthesis. Functionally, catalyzes the base-exchange of a guanine (G) residue with the queuine precursor 7-aminomethyl-7-deazaguanine (PreQ1) at position 34 (anticodon wobble position) in tRNAs with GU(N) anticodons (tRNA-Asp, -Asn, -His and -Tyr). Catalysis occurs through a double-displacement mechanism. The nucleophile active site attacks the C1' of nucleotide 34 to detach the guanine base from the RNA, forming a covalent enzyme-RNA intermediate. The proton acceptor active site deprotonates the incoming PreQ1, allowing a nucleophilic attack on the C1' of the ribose to form the product. After dissociation, two additional enzymatic reactions on the tRNA convert PreQ1 to queuine (Q), resulting in the hypermodified nucleoside queuosine (7-(((4,5-cis-dihydroxy-2-cyclopenten-1-yl)amino)methyl)-7-deazaguanosine). In Clostridium kluyveri (strain NBRC 12016), this protein is Queuine tRNA-ribosyltransferase.